The primary structure comprises 438 residues: Trigger factor (438 aa).

The PPIase FKBP-type domain occupies 162–247 (GDIVTIDFEG…VKEIKVKELP (86 aa)).

Belongs to the FKBP-type PPIase family. Tig subfamily.

Its subcellular location is the cytoplasm. It catalyses the reaction [protein]-peptidylproline (omega=180) = [protein]-peptidylproline (omega=0). Involved in protein export. Acts as a chaperone by maintaining the newly synthesized protein in an open conformation. Functions as a peptidyl-prolyl cis-trans isomerase. This is Trigger factor from Caldicellulosiruptor saccharolyticus (strain ATCC 43494 / DSM 8903 / Tp8T 6331).